The following is a 130-amino-acid chain: Ribonuclease VapC22 (130 aa).

The PINc domain occupies 4-119; it reads VLLDSHVAYW…RLVTKDRRLR (116 aa). The Mg(2+) site is built by Asp7 and Asp97.

Belongs to the PINc/VapC protein family. Mg(2+) serves as cofactor.

Its subcellular location is the secreted. Toxic component of a type II toxin-antitoxin (TA) system. An RNase. Upon expression in M.smegmatis inhibits translation and colony formation. Its toxic effect on colony formation is neutralized by coexpression with cognate antitoxin VapB22; the effect on translation has not been tested but is probably neutralized also. The polypeptide is Ribonuclease VapC22 (Mycobacterium tuberculosis (strain ATCC 25618 / H37Rv)).